The following is a 102-amino-acid chain: NADH-quinone oxidoreductase subunit K (102 aa).

The next 3 membrane-spanning stretches (helical) occupy residues 5-25 (LGHF…GIFL), 31-51 (IVLL…FVAF), and 62-82 (VFVF…LAIL).

This sequence belongs to the complex I subunit 4L family. As to quaternary structure, NDH-1 is composed of 14 different subunits. Subunits NuoA, H, J, K, L, M, N constitute the membrane sector of the complex.

The protein resides in the cell inner membrane. It carries out the reaction a quinone + NADH + 5 H(+)(in) = a quinol + NAD(+) + 4 H(+)(out). Its function is as follows. NDH-1 shuttles electrons from NADH, via FMN and iron-sulfur (Fe-S) centers, to quinones in the respiratory chain. The immediate electron acceptor for the enzyme in this species is believed to be ubiquinone. Couples the redox reaction to proton translocation (for every two electrons transferred, four hydrogen ions are translocated across the cytoplasmic membrane), and thus conserves the redox energy in a proton gradient. The chain is NADH-quinone oxidoreductase subunit K from Paracidovorax citrulli (strain AAC00-1) (Acidovorax citrulli).